Reading from the N-terminus, the 319-residue chain is Cobalamin biosynthesis protein CobD (319 aa).

4 helical membrane passes run 56–76 (GLWI…LWLM), 153–173 (VDGV…LAMA), 204–224 (LANW…AWFI), and 290–310 (IPLS…LFAL).

This sequence belongs to the CobD/CbiB family.

It localises to the cell membrane. Its pathway is cofactor biosynthesis; adenosylcobalamin biosynthesis. Converts cobyric acid to cobinamide by the addition of aminopropanol on the F carboxylic group. This chain is Cobalamin biosynthesis protein CobD, found in Photorhabdus laumondii subsp. laumondii (strain DSM 15139 / CIP 105565 / TT01) (Photorhabdus luminescens subsp. laumondii).